A 475-amino-acid polypeptide reads, in one-letter code: Gamma-aminobutyric acid receptor subunit gamma-2 (475 aa).

Residues 1–39 form the signal peptide; sequence MSSPNIWSTGSSVYSTPVFSQKMTVWILLLLSLYPGFTS. Topologically, residues 40-275 are extracellular; that stretch reads QKSDDDYEDY…FDLSRRMGYF (236 aa). N-linked (GlcNAc...) asparagine glycosylation is found at Asn52 and Asn129. A disulfide bridge links Cys190 with Cys204. Asn247 carries N-linked (GlcNAc...) asparagine glycosylation. The helical transmembrane segment at 276–296 threads the bilayer; it reads TIQTYIPCTLIVVLSWVSFWI. The Cytoplasmic portion of the chain corresponds to 297 to 302; that stretch reads NKDAVP. Residues 303–322 traverse the membrane as a helical segment; that stretch reads ARTSLGITTVLTMTTLSTIA. Residues 323-334 are Extracellular-facing; sequence RKSLPKVSYVTA. A helical transmembrane segment spans residues 335–359; that stretch reads MDLFVSVCFIFVFSALVEYGTLHYF. Residues 360-451 are Cytoplasmic-facing; sequence VSNRKPSKDK…IHIRIAKMDS (92 aa). Residues 433–450 are interaction with GABARAP; that stretch reads RTGAWRHGRIHIRIAKMD. A helical transmembrane segment spans residues 452-472; that stretch reads YARIFFPTAFCLFNLVYWVSY. Residues 473–475 are Extracellular-facing; that stretch reads LYL.

The protein belongs to the ligand-gated ion channel (TC 1.A.9) family. Gamma-aminobutyric acid receptor (TC 1.A.9.5) subfamily. GABRG2 sub-subfamily. As to quaternary structure, heteropentamer, formed by a combination of alpha (GABRA1-6), beta (GABRB1-3), gamma (GABRG1-3), delta (GABRD), epsilon (GABRE), rho (GABRR1-3), pi (GABRP) and theta (GABRQ) chains, each subunit exhibiting distinct physiological and pharmacological properties. Interacts with GABARAP. Interacts with KIF21B. Identified in a complex of 720 kDa composed of LHFPL4, NLGN2, GABRA1, GABRB2, GABRG2 and GABRB3. Interacts with LHFPL4. Interacts with SHISA7; interaction leads to the regulation of GABA(A) receptor trafficking, channel deactivation kinetics and pharmacology. In terms of processing, palmitoylated by ZDHHC3/GODZ; required for the accumulation of GABA(A) receptors at the postsynaptic membrane of inhibitory GABAergic synapses.

The protein localises to the postsynaptic cell membrane. Its subcellular location is the cell membrane. It localises to the cell projection. It is found in the dendrite. The protein resides in the cytoplasmic vesicle membrane. The enzyme catalyses chloride(in) = chloride(out). With respect to regulation, allosterically activated by benzodiazepines. Activated by pentobarbital. Potentiated by etomidate, propofol, pregnanolone. Inhibited by the antagonist bicuculline. Inhibited by zinc ions. Potentiated by histamine. Its function is as follows. Gamma subunit of the heteropentameric ligand-gated chloride channel gated by gamma-aminobutyric acid (GABA), a major inhibitory neurotransmitter in the brain. GABA-gated chloride channels, also named GABA(A) receptors (GABAAR), consist of five subunits arranged around a central pore and contain GABA active binding site(s) located at the alpha and beta subunit interface(s). When activated by GABA, GABAARs selectively allow the flow of chloride anions across the cell membrane down their electrochemical gradient. Gamma-2/GABRG2-containing GABAARs are found at both synaptic and extrasynaptic sites. Chloride influx into the postsynaptic neuron following GABAAR opening decreases the neuron ability to generate a new action potential, thereby reducing nerve transmission. GABAARs containing alpha-1 and beta-2 or -3 subunits exhibit synaptogenic activity; the gamma-2 subunit being necessary but not sufficient to induce rapid synaptic contacts formation. Extrasynaptic gamma-2-containing receptors contribute to the tonic GABAergic inhibition. GABAARs function also as histamine receptor where histamine binds at the interface of two neighboring beta subunits and potentiates GABA response in a gamma-2 subunit-controlled manner. This chain is Gamma-aminobutyric acid receptor subunit gamma-2, found in Homo sapiens (Human).